Consider the following 164-residue polypeptide: MNNTDLLEKIIRHQQNKDPAYPFREHLLMQLCIRVNKKIQNSTSEFFGAYGINHSVYMVLAILSMEEQHCLSPSEISQKLQFTRTNITRITDFLEKAGYIKRTDSREDRRTKKISLTSEGMFFIQRLTLAQNTYLKELWSNLTCDECEMFEVISKKLLAHFSDI.

The HTH marR-type domain occupies 25 to 159; it reads EHLLMQLCIR…FEVISKKLLA (135 aa).

It is found in the cytoplasm. The protein is HTH-type transcriptional regulator PapX (papX) of Escherichia coli.